The chain runs to 271 residues: Extracellular metalloprotease ARB_05317 (271 aa).

A signal peptide spans 1-19; that stretch reads MRFSVLLTGLAAAGSIATA. Asn-136 carries N-linked (GlcNAc...) asparagine glycosylation. His-185 contacts Zn(2+). Glu-186 is a catalytic residue. His-189 contributes to the Zn(2+) binding site. N-linked (GlcNAc...) asparagine glycosylation is present at Asn-200. Cys-222 and Cys-248 are oxidised to a cystine.

Belongs to the peptidase M43B family.

It localises to the secreted. Its function is as follows. Secreted metalloproteinase that allows assimilation of proteinaceous substrates. Plays a pivotal role as a pathogenicity determinant during infections and contributes to the ability of the pathogen to persist within the mammalian host. The polypeptide is Extracellular metalloprotease ARB_05317 (Arthroderma benhamiae (strain ATCC MYA-4681 / CBS 112371) (Trichophyton mentagrophytes)).